Consider the following 419-residue polypeptide: Carboxypeptidase A1 (419 aa).

Residues 1 to 16 (MWGLLIFSVLLGGVLA) form the signal peptide. A propeptide spans 17-110 (KEDFVGHQVL…QEQMFASQGR (94 aa)) (activation peptide). A Peptidase M14 domain is found at 121–414 (TYHTLEEIYD…LALLTIMEHT (294 aa)). Zn(2+)-binding residues include His-179 and Glu-182. Substrate contacts are provided by residues 179 to 182 (HSRE), Arg-237, and 254 to 255 (NR). Cys-248 and Cys-271 form a disulfide bridge. Residue His-306 participates in Zn(2+) binding. Residues 307-308 (SY) and Tyr-358 contribute to the substrate site. Glu-380 (proton donor/acceptor) is an active-site residue.

This sequence belongs to the peptidase M14 family. In terms of assembly, monomer. May form a complex with proelastase 2. The cofactor is Zn(2+).

It is found in the secreted. It catalyses the reaction Release of a C-terminal amino acid, but little or no action with -Asp, -Glu, -Arg, -Lys or -Pro.. It carries out the reaction leukotriene C4 + H2O = leukotriene F4 + glycine. Carboxypeptidase that catalyzes the release of a C-terminal amino acid, but has little or no action with -Asp, -Glu, -Arg, -Lys or -Pro. Catalyzes the conversion of leukotriene C4 to leukotriene F4 via the hydrolysis of an amide bond. The chain is Carboxypeptidase A1 (CPA1) from Sus scrofa (Pig).